Reading from the N-terminus, the 1348-residue chain is Putative late blight resistance protein homolog R1B-12 (1348 aa).

2 coiled-coil regions span residues 446–469 (RYSD…ESLQ) and 561–583 (PRMN…KLLN). The NB-ARC domain maps to 552 to 848 (RTSSQLTRTP…ISESFIKSCE (297 aa)). ATP is bound at residue 595–602 (GMPGLGKT). LRR repeat units lie at residues 977-1001 (FKFL…LLYL), 1051-1074 (LRHL…SAKL), 1123-1147 (PITL…ISAQ), 1151-1170 (YLKL…TADH), 1171-1194 (LKHL…EVSN), 1197-1219 (FPQL…ADDA), 1220-1244 (FPNL…FMDI), and 1309-1332 (LPGI…DMDA). Positions 1284-1348 (VKKMVLKFDT…VGKLINRGML (65 aa)) constitute an HMA domain.

This sequence belongs to the disease resistance NB-LRR family.

It is found in the cytoplasm. The protein localises to the membrane. Confers resistance to late blight (Phytophthora infestans) races carrying the avirulence gene Avr1. Resistance proteins guard the plant against pathogens that contain an appropriate avirulence protein via an indirect interaction with this avirulence protein. That triggers a defense system including the hypersensitive response, which restricts the pathogen growth. The sequence is that of Putative late blight resistance protein homolog R1B-12 (R1B-12) from Solanum demissum (Wild potato).